A 120-amino-acid chain; its full sequence is Large ribosomal subunit protein uL18 (120 aa).

Belongs to the universal ribosomal protein uL18 family. In terms of assembly, part of the 50S ribosomal subunit; part of the 5S rRNA/L5/L18/L25 subcomplex. Contacts the 5S and 23S rRNAs.

In terms of biological role, this is one of the proteins that bind and probably mediate the attachment of the 5S RNA into the large ribosomal subunit, where it forms part of the central protuberance. The chain is Large ribosomal subunit protein uL18 from Treponema pallidum (strain Nichols).